The sequence spans 403 residues: Phosphoglycerate kinase (403 aa).

Residues 22–24 (DLN), Arg37, 60–63 (HLGN), Arg119, and Arg152 each bind substrate. Residues Lys202, Glu325, and 355 to 358 (GGDT) each bind ATP.

This sequence belongs to the phosphoglycerate kinase family. As to quaternary structure, monomer.

The protein localises to the cytoplasm. The catalysed reaction is (2R)-3-phosphoglycerate + ATP = (2R)-3-phospho-glyceroyl phosphate + ADP. Its pathway is carbohydrate degradation; glycolysis; pyruvate from D-glyceraldehyde 3-phosphate: step 2/5. This is Phosphoglycerate kinase from Orientia tsutsugamushi (strain Boryong) (Rickettsia tsutsugamushi).